Here is a 460-residue protein sequence, read N- to C-terminus: TNF receptor-associated factor family protein DDB_G0290883 (460 aa).

Residues 27 to 67 form an RING-type; degenerate zinc finger; that stretch reads CPICFEFIYKKQIYQCKSGHHACKECWEKSLETKKECMTCK. 2 consecutive TRAF-type zinc fingers follow at residues 141-194 and 196-253; these read SHLI…KKEL and THYK…SELQ. Residues 320–448 form the MATH domain; the sequence is GYRNKWIISN…DDKLTIEIYI (129 aa).

It belongs to the TNF receptor-associated factor family. A subfamily.

It is found in the cytoplasm. Functionally, probable adapter protein and signal transducer that links members of the tumor necrosis factor receptor family to different signaling pathways by association with the receptor cytoplasmic domain and kinases. The polypeptide is TNF receptor-associated factor family protein DDB_G0290883 (Dictyostelium discoideum (Social amoeba)).